A 281-amino-acid chain; its full sequence is MAEEIVVEPESLREIEHIVLVLSGKGGVGKSSVTTQLGMALACRGLKVGILDIDLTGPSLPRMVGMEGKSVLQGPRGWIPVDVPTGMEQGCLRVMSLGFLLDDRGDSVVWRGPKKTAMIKQFISDVYWGALDYLLIDTPPGTSDEHISIAEELRGARPDGAIIVSTPQKVAVADVKKEINFCRKVNFKLLGVVENMSGFVCPHCSECTNIFARGGGESLALESGVPFLGTVPIDPAFVEMIESQSSREEPLISLYKTSGLYPIFARIVQHVLDQGIPSRCQ.

24 to 31 (GKGGVGKS) is a binding site for ATP. [4Fe-4S] cluster contacts are provided by Cys-201 and Cys-204.

This sequence belongs to the Mrp/NBP35 ATP-binding proteins family. NUBP2/CFD1 subfamily. As to quaternary structure, heterotetramer of 2 NBP35 and 2 CFD1 chains. The cofactor is [4Fe-4S] cluster.

It localises to the cytoplasm. Component of the cytosolic iron-sulfur (Fe/S) protein assembly (CIA) machinery. Required for maturation of extramitochondrial Fe-S proteins. The NBP35-CFD1 heterotetramer forms a Fe-S scaffold complex, mediating the de novo assembly of an Fe-S cluster and its transfer to target apoproteins. Required for biogenesis and export of both ribosomal subunits, which may reflect a role in assembly of the Fe/S clusters in RLI1, a protein which performs rRNA processing and ribosome export. The sequence is that of Cytosolic Fe-S cluster assembly factor CFD1 from Eremothecium gossypii (strain ATCC 10895 / CBS 109.51 / FGSC 9923 / NRRL Y-1056) (Yeast).